The sequence spans 367 residues: tRNA/tmRNA (uracil-C(5))-methyltransferase (367 aa).

Positions 190, 218, 223, 239, and 299 each coordinate S-adenosyl-L-methionine. Residue Cys-324 is the Nucleophile of the active site. The active-site Proton acceptor is the Glu-358.

This sequence belongs to the class I-like SAM-binding methyltransferase superfamily. RNA M5U methyltransferase family. TrmA subfamily.

It catalyses the reaction uridine(54) in tRNA + S-adenosyl-L-methionine = 5-methyluridine(54) in tRNA + S-adenosyl-L-homocysteine + H(+). It carries out the reaction uridine(341) in tmRNA + S-adenosyl-L-methionine = 5-methyluridine(341) in tmRNA + S-adenosyl-L-homocysteine + H(+). Functionally, dual-specificity methyltransferase that catalyzes the formation of 5-methyluridine at position 54 (m5U54) in all tRNAs, and that of position 341 (m5U341) in tmRNA (transfer-mRNA). The sequence is that of tRNA/tmRNA (uracil-C(5))-methyltransferase from Yersinia enterocolitica serotype O:8 / biotype 1B (strain NCTC 13174 / 8081).